Consider the following 813-residue polypeptide: Acyl-homoserine lactone acylase QuiP (813 aa).

The signal sequence occupies residues 1–26; the sequence is MAAPAFPPFRLRFATAATLLGMLGLA. Ser262 acts as the Nucleophile in catalysis.

This sequence belongs to the peptidase S45 family. In terms of assembly, heterodimer of an alpha subunit and a beta subunit processed from the same precursor.

Its subcellular location is the periplasm. The enzyme catalyses an N-acyl-L-homoserine lactone + H2O = L-homoserine lactone + a carboxylate. In terms of biological role, catalyzes the deacylation of acyl-homoserine lactone (AHL or acyl-HSL), releasing homoserine lactone (HSL) and the corresponding fatty acid. Possesses a specificity for the degradation of long-chain acyl-HSLs (side chains of seven or more carbons in length). This is Acyl-homoserine lactone acylase QuiP (quiP) from Pseudomonas putida (strain ATCC 47054 / DSM 6125 / CFBP 8728 / NCIMB 11950 / KT2440).